The sequence spans 493 residues: Cytochrome P450 2E1 (493 aa).

Position 298–303 (298–303) interacts with substrate; sequence FAGTET. A heme-binding site is contributed by Cys-437.

It belongs to the cytochrome P450 family. Interacts with chaperones HSP70 and HSP90; this interaction is required for initial targeting to mitochondria. Requires heme as cofactor.

It is found in the endoplasmic reticulum membrane. The protein localises to the microsome membrane. It localises to the mitochondrion inner membrane. The catalysed reaction is an organic molecule + reduced [NADPH--hemoprotein reductase] + O2 = an alcohol + oxidized [NADPH--hemoprotein reductase] + H2O + H(+). It carries out the reaction (5Z,8Z,11Z)-eicosatrienoate + reduced [NADPH--hemoprotein reductase] + O2 = 19-hydroxy-(5Z,8Z,11Z)-eicosatrienoate + oxidized [NADPH--hemoprotein reductase] + H2O + H(+). It catalyses the reaction (5Z,8Z,11Z,14Z,17Z)-eicosapentaenoate + reduced [NADPH--hemoprotein reductase] + O2 = 19-hydroxy-(5Z,8Z,11Z,14Z,17Z)-eicosapentaenoate + oxidized [NADPH--hemoprotein reductase] + H2O + H(+). The enzyme catalyses (4Z,7Z,10Z,13Z,16Z,19Z)-docosahexaenoate + reduced [NADPH--hemoprotein reductase] + O2 = 21-hydroxy-(4Z,7Z,10Z,13Z,16Z,19Z)-docosahexaenoate + oxidized [NADPH--hemoprotein reductase] + H2O + H(+). The catalysed reaction is dodecanoate + reduced [NADPH--hemoprotein reductase] + O2 = 11-hydroxydodecanoate + oxidized [NADPH--hemoprotein reductase] + H2O + H(+). It carries out the reaction tetradecanoate + reduced [NADPH--hemoprotein reductase] + O2 = 13-hydroxytetradecanoate + oxidized [NADPH--hemoprotein reductase] + H2O + H(+). It catalyses the reaction 4-nitrophenol + NADPH + O2 + H(+) = 4-nitrocatechol + NADP(+) + H2O. It participates in lipid metabolism; fatty acid metabolism. The omega-1 hydroxylase activity is stimulated by cytochrome b5. In terms of biological role, a cytochrome P450 monooxygenase involved in the metabolism of fatty acids. Mechanistically, uses molecular oxygen inserting one oxygen atom into a substrate, and reducing the second into a water molecule, with two electrons provided by NADPH via cytochrome P450 reductase (NADPH--hemoprotein reductase). Catalyzes the hydroxylation of carbon-hydrogen bonds. Hydroxylates fatty acids specifically at the omega-1 position displaying the highest catalytic activity for saturated fatty acids. May be involved in the oxidative metabolism of xenobiotics. The sequence is that of Cytochrome P450 2E1 from Homo sapiens (Human).